The sequence spans 165 residues: Protein SprT (165 aa).

A SprT-like domain is found at glutamate 20–valine 163. Residue histidine 78 participates in Zn(2+) binding. Glutamate 79 is a catalytic residue. Histidine 82 provides a ligand contact to Zn(2+).

The protein belongs to the SprT family. It depends on Zn(2+) as a cofactor.

The protein resides in the cytoplasm. The chain is Protein SprT from Shigella sonnei (strain Ss046).